The primary structure comprises 456 residues: RUN domain-containing protein 3B (456 aa).

The interval 1–24 is disordered; the sequence is MASRSLGGLSGIRGGGGGGGKKSL. A compositionally biased stretch (gly residues) spans 8–21; sequence GLSGIRGGGGGGGK. At R13 the chain carries Omega-N-methylarginine. The RUN domain occupies 57–189; it reads DDSSPEFNNF…IDFSFCLKGE (133 aa). S215 and S216 each carry phosphoserine. Residues 216–237 are disordered; that stretch reads SDEEELRTLGSSGSESSTPENV. The span at 224–235 shows a compositional bias: polar residues; it reads LGSSGSESSTPE. Residues 300–325 are a coiled coil; the sequence is AHKLEKEQLEYIIVELQDQLTVLKNN. Residues 382–405 are compositionally biased toward polar residues; sequence SLSQTSLDPGQSQEGDGKQDTLNV. Residues 382–411 are disordered; it reads SLSQTSLDPGQSQEGDGKQDTLNVMSEGKE.

It belongs to the RUNDC3 family. In terms of assembly, interacts with RAP2A.

The polypeptide is RUN domain-containing protein 3B (RUNDC3B) (Pongo abelii (Sumatran orangutan)).